Reading from the N-terminus, the 309-residue chain is NADH-cytochrome b5 reductase 1 (309 aa).

A helical membrane pass occupies residues 30–50 (FVPYAVAVTAILAGLKLFTGG). The FAD-binding FR-type domain maps to 60–165 (TEFQEFVLKE…RGPKGAMVYT (106 aa)). Residues 145–160 (TTLK…GPKG) and 171–208 (HIGM…KLDL) each bind FAD.

It belongs to the flavoprotein pyridine nucleotide cytochrome reductase family. In terms of assembly, monomer. Component of the 2-(3-amino-3-carboxypropyl)histidine synthase complex composed of dph1, dph2, dph3 and a NADH-dependent reductase, predominantly cbr1. FAD is required as a cofactor.

The protein resides in the mitochondrion outer membrane. The enzyme catalyses 2 Fe(III)-[cytochrome b5] + NADH = 2 Fe(II)-[cytochrome b5] + NAD(+) + H(+). The catalysed reaction is 2 Fe(3+)-[Dph3] + NADH = 2 Fe(2+)-[Dph3] + NAD(+) + H(+). It participates in protein modification; peptidyl-diphthamide biosynthesis. In terms of biological role, NADH-dependent reductase for dph3 and cytochrome b5. Required for the first step of diphthamide biosynthesis, a post-translational modification of histidine which occurs in elongation factor 2. Dph1 and dph2 transfer a 3-amino-3-carboxypropyl (ACP) group from S-adenosyl-L-methionine (SAM) to a histidine residue, the reaction is assisted by a reduction system comprising dph3 and a NADH-dependent reductase, predominantly cbr1. By reducing dph3, also involved in the formation of the tRNA wobble base modification mcm5s 2U (5-methoxycarbonylmethyl-2-thiouridine), mediated by the elongator complex. The cytochrome b5/NADH cytochrome b5 reductase electron transfer system supports the catalytic activity of several sterol biosynthetic enzymes. This is NADH-cytochrome b5 reductase 1 (cbr1) from Aspergillus fumigatus (strain ATCC MYA-4609 / CBS 101355 / FGSC A1100 / Af293) (Neosartorya fumigata).